A 447-amino-acid polypeptide reads, in one-letter code: MTKVITRFAPSPTGMLHVGNIRAALLNWLYAKKHNGQFILRFDDTDLERSKQEYKDAIEEDLKFLNINWDQTFNQLSRLSRYDAIKNLLLDKKRLYACYETPEELELKRKFQLSKGLPPIYDRASLNLTEEQAKKYIEQGRKPHYRFLVNHEPISWHDMIKGEVKYDGKALSDPIVIRADGSMTYMLCSVIDDIDYDITHIIRGEDHVSNTAIQMQMFEALNTTPPTFGHLSLIINKDEKISKRVGGFEIATLRKEIGIEAMAIASFFSLLGSSAQILPYKSMEKLANQFEISSFSKSPTIYQPEDLERLNHKLLISLDFDTVKERLKEIDAEYIDENFWLSVSPNLQKLRDVKDWWEICHQTPNVENLNLDKEYLKQAAELLPKGEITKDSWSIWTKEITNITGRKGKELFLPLRLALTARESGPEIASVLPLIDREEIIKRLTSA.

Residues 10–20 (PSPTGMLHVGN) carry the 'HIGH' region motif. Positions 240–244 (KISKR) match the 'KMSKS' region motif. K243 is an ATP binding site.

It belongs to the class-I aminoacyl-tRNA synthetase family. Glutamate--tRNA ligase type 1 subfamily. As to quaternary structure, monomer.

The protein resides in the cytoplasm. It carries out the reaction tRNA(Glu) + L-glutamate + ATP = L-glutamyl-tRNA(Glu) + AMP + diphosphate. Its function is as follows. Catalyzes the attachment of glutamate to tRNA(Glu) in a two-step reaction: glutamate is first activated by ATP to form Glu-AMP and then transferred to the acceptor end of tRNA(Glu). In Rickettsia rickettsii (strain Sheila Smith), this protein is Glutamate--tRNA ligase 1.